The sequence spans 561 residues: DNA ligase (561 aa).

ATP is bound at residue Glu-253. Catalysis depends on Lys-255, which acts as the N6-AMP-lysine intermediate. Arg-260, Arg-275, Glu-304, Phe-344, Arg-421, and Lys-427 together coordinate ATP.

Belongs to the ATP-dependent DNA ligase family. Requires Mg(2+) as cofactor.

The catalysed reaction is ATP + (deoxyribonucleotide)n-3'-hydroxyl + 5'-phospho-(deoxyribonucleotide)m = (deoxyribonucleotide)n+m + AMP + diphosphate.. Functionally, DNA ligase that seals nicks in double-stranded DNA during DNA replication, DNA recombination and DNA repair. In Halobacterium salinarum (strain ATCC 29341 / DSM 671 / R1), this protein is DNA ligase.